The sequence spans 993 residues: UPF0182 protein MAV_4137 (993 aa).

7 consecutive transmembrane segments (helical) span residues isoleucine 18–aspartate 38, phenylalanine 63–valine 83, leucine 113–tyrosine 133, phenylalanine 175–isoleucine 195, isoleucine 210–aspartate 230, alanine 254–phenylalanine 274, and isoleucine 287–valine 307. Residues asparagine 903–glycine 941 form a disordered region. Over residues serine 929–proline 939 the composition is skewed to pro residues.

It belongs to the UPF0182 family.

Its subcellular location is the cell membrane. This chain is UPF0182 protein MAV_4137, found in Mycobacterium avium (strain 104).